We begin with the raw amino-acid sequence, 285 residues long: Acetyl-coenzyme A carboxylase carboxyl transferase subunit beta (285 aa).

Residues 33 to 285 (MWIKCSKCGK…TLGNILRMHS (253 aa)) form the CoA carboxyltransferase N-terminal domain. Zn(2+) is bound by residues cysteine 37, cysteine 40, cysteine 56, and cysteine 59. Residues 37-59 (CSKCGKILYKSDVDDNFKVCPKC) form a C4-type zinc finger.

Belongs to the AccD/PCCB family. In terms of assembly, acetyl-CoA carboxylase is a heterohexamer composed of biotin carboxyl carrier protein (AccB), biotin carboxylase (AccC) and two subunits each of ACCase subunit alpha (AccA) and ACCase subunit beta (AccD). It depends on Zn(2+) as a cofactor.

The protein resides in the cytoplasm. The enzyme catalyses N(6)-carboxybiotinyl-L-lysyl-[protein] + acetyl-CoA = N(6)-biotinyl-L-lysyl-[protein] + malonyl-CoA. Its pathway is lipid metabolism; malonyl-CoA biosynthesis; malonyl-CoA from acetyl-CoA: step 1/1. Component of the acetyl coenzyme A carboxylase (ACC) complex. Biotin carboxylase (BC) catalyzes the carboxylation of biotin on its carrier protein (BCCP) and then the CO(2) group is transferred by the transcarboxylase to acetyl-CoA to form malonyl-CoA. In Clostridium acetobutylicum (strain ATCC 824 / DSM 792 / JCM 1419 / IAM 19013 / LMG 5710 / NBRC 13948 / NRRL B-527 / VKM B-1787 / 2291 / W), this protein is Acetyl-coenzyme A carboxylase carboxyl transferase subunit beta.